A 1245-amino-acid chain; its full sequence is ABC transporter B family member 13 (1245 aa).

Residues 1–14 (MDNTERSSNGNIQA) show a composition bias toward polar residues. Residues 1–20 (MDNTERSSNGNIQAETEAKE) are disordered. Residues 47-336 (MLLGGLGACI…AAPSLSAIAK (290 aa)) enclose the ABC transmembrane type-1 1 domain. A helical membrane pass occupies residues 48–68 (LLGGLGACIHGATLPLFFVFF). A glycan (N-linked (GlcNAc...) asparagine) is linked at asparagine 77. 5 helical membrane-spanning segments follow: residues 94–114 (LYLVYLGLVNFVSAWIGVSCW), 171–191 (HVLRYLSQFIAGFVIGFLSVW), 195–215 (LLTLGVVPLIAIAGGGYAIVM), 276–296 (LGVGLTYSLLFCAWALLLWYA), and 314–334 (ILNVIFSGFALGQAAPSLSAI). N-linked (GlcNAc...) asparagine glycosylation is found at asparagine 351 and asparagine 391. The 236-residue stretch at 372 to 607 (IEFQKVSFAY…GGDYATLVNC (236 aa)) folds into the ABC transporter 1 domain. 406–413 (GPSGSGKS) serves as a coordination point for ATP. The segment covering 610–629 (TEPQENSRSIMSETCKSQAG) has biased composition (polar residues). The tract at residues 610–660 (TEPQENSRSIMSETCKSQAGSSSSRRVSSSRRTSSFRVDQEKTKNDDSKKD) is disordered. Over residues 630 to 646 (SSSSRRVSSSRRTSSFR) the composition is skewed to low complexity. A compositionally biased stretch (basic and acidic residues) spans 647–660 (VDQEKTKNDDSKKD). Residues 681–969 (ALLGSIGAVL…TLALTPDIVK (289 aa)) form the ABC transmembrane type-1 2 domain. The next 2 helical transmembrane spans lie at 686-706 (IGAVLAGAQTPLFSMGIAYVL) and 725-745 (AIIFAGAGIVTAPIYLLQHYF). A glycan (N-linked (GlcNAc...) asparagine) is linked at asparagine 778. 4 helical membrane passes run 805–822 (IVQNLSLTVTALALAFFY), 828–848 (AVVTACFPLLIAASLTEQLFL), 913–933 (LSQFLAFCSYALGLWYVSVLI), and 947–967 (FMVLIVTAFSVSETLALTPDI). The ABC transporter 2 domain occupies 1004–1240 (IEFRNVSFVY…PNGFYKQLTS (237 aa)). N-linked (GlcNAc...) asparagine glycosylation is present at asparagine 1008. 1039–1046 (GPSGSGKS) is an ATP binding site. Asparagine 1106 carries N-linked (GlcNAc...) asparagine glycosylation.

This sequence belongs to the ABC transporter superfamily. ABCB family. Multidrug resistance exporter (TC 3.A.1.201) subfamily.

The protein localises to the membrane. The sequence is that of ABC transporter B family member 13 (ABCB13) from Arabidopsis thaliana (Mouse-ear cress).